The chain runs to 491 residues: mRNA cleavage and polyadenylation factor clp1 (491 aa).

Residues Glu28 and Lys78 each coordinate ATP. The disordered stretch occupies residues 128 to 160 (RAAAAQAQQQHPTHHQQQQQGRGAGAGVARSKP). A compositionally biased stretch (low complexity) spans 130 to 148 (AAAQAQQQHPTHHQQQQQG). 171 to 176 (GVGKTS) contributes to the ATP binding site.

This sequence belongs to the Clp1 family. Clp1 subfamily. In terms of assembly, component of a pre-mRNA cleavage factor complex. Interacts directly with PCF11.

It localises to the nucleus. Required for endonucleolytic cleavage during polyadenylation-dependent pre-mRNA 3'-end formation. This is mRNA cleavage and polyadenylation factor clp1 (paa-7) from Neurospora crassa (strain ATCC 24698 / 74-OR23-1A / CBS 708.71 / DSM 1257 / FGSC 987).